The primary structure comprises 165 residues: Small ribosomal subunit protein eS10 (165 aa).

Y12 carries the post-translational modification Phosphotyrosine. A disordered region spans residues 92 to 165 (ATLRRSRPET…FGRGRGQPPQ (74 aa)). The segment covering 97 to 128 (SRPETGRPRPKGLEGERPARLTRGEADRDTYR) has biased composition (basic and acidic residues). Glycyl lysine isopeptide (Lys-Gly) (interchain with G-Cter in ubiquitin) cross-links involve residues K138 and K139. Residue S146 is modified to Phosphoserine. R153 carries the omega-N-methylarginine modification. Residues 154–165 (GGFGRGRGQPPQ) are compositionally biased toward gly residues. Residues R158 and R160 each carry the symmetric dimethylarginine modification.

Belongs to the eukaryotic ribosomal protein eS10 family. As to quaternary structure, component of the small ribosomal subunit. The methylated form interacts with NPM1. Methylated by PRMT5. Methylation is necessary for its interaction with NPS1, its localization in the granular component (GC) region of the nucleolus, for the proper assembly of ribosomes, protein synthesis and optimal cell proliferation. Post-translationally, monoubiquitinated by ZNF598 when a ribosome has stalled during translation of poly(A) sequences, leading to preclude synthesis of a long poly-lysine tail and initiate the ribosome quality control (RQC) pathway to degrade the potentially detrimental aberrant nascent polypeptide. Deubiquitinated by OTUD3 and USP21, antagonizing ZNF598 activity. Deubiquitinated by OTUD1, antagonizing ZNF598 activity and stimulating formation of polysomes: deubiquitination by OTUD1 promotes stability and translation of a subset mRNAs with a high abundance of rare codons can limit the translation rate. Deubiquitinated by USP10.

It localises to the cytoplasm. The protein localises to the nucleus. The protein resides in the nucleolus. Component of the 40S ribosomal subunit. The ribosome is a large ribonucleoprotein complex responsible for the synthesis of proteins in the cell. This Oryctolagus cuniculus (Rabbit) protein is Small ribosomal subunit protein eS10 (RPS10).